A 97-amino-acid polypeptide reads, in one-letter code: YcgL domain-containing protein PSEEN4034 (97 aa).

Residues Arg-3–Pro-87 form the YcgL domain.

The sequence is that of YcgL domain-containing protein PSEEN4034 from Pseudomonas entomophila (strain L48).